A 414-amino-acid chain; its full sequence is 3-phosphoshikimate 1-carboxyvinyltransferase (414 aa).

3 residues coordinate 3-phosphoshikimate: K20, S21, and R25. K20 is a binding site for phosphoenolpyruvate. Positions 85 and 113 each coordinate phosphoenolpyruvate. 3-phosphoshikimate contacts are provided by S154, S155, Q156, S181, D296, and K323. Q156 contacts phosphoenolpyruvate. D296 functions as the Proton acceptor in the catalytic mechanism. Residues R327, R371, and K395 each coordinate phosphoenolpyruvate.

The protein belongs to the EPSP synthase family. Monomer.

It localises to the cytoplasm. The enzyme catalyses 3-phosphoshikimate + phosphoenolpyruvate = 5-O-(1-carboxyvinyl)-3-phosphoshikimate + phosphate. Its pathway is metabolic intermediate biosynthesis; chorismate biosynthesis. In terms of biological role, catalyzes the transfer of the enolpyruvyl moiety of phosphoenolpyruvate (PEP) to the 5-hydroxyl of shikimate-3-phosphate (S3P) to produce enolpyruvyl shikimate-3-phosphate and inorganic phosphate. This chain is 3-phosphoshikimate 1-carboxyvinyltransferase, found in Saccharolobus islandicus (strain M.14.25 / Kamchatka #1) (Sulfolobus islandicus).